The following is a 285-amino-acid chain: Thrombin-like enzyme TLBm (285 aa).

A Peptidase S1 domain is found at 1-273 (VIGGDECNIN…HLDWSQSVIA (273 aa)). Intrachain disulfides connect cysteine 7/cysteine 181, cysteine 30/cysteine 46, cysteine 94/cysteine 284, cysteine 156/cysteine 234, cysteine 192/cysteine 209, and cysteine 224/cysteine 249. Catalysis depends on charge relay system residues histidine 45 and aspartate 113. The active-site Charge relay system is serine 228.

The protein belongs to the peptidase S1 family. Snake venom subfamily. As to quaternary structure, monomer. Post-translationally, homologous thrombin-like enzymes are N-glycosylated. This enzyme does not contain the consensus glycosylation sites, suggesting it is not glycosylated. In terms of tissue distribution, expressed by the venom gland.

Its subcellular location is the secreted. With respect to regulation, inhibited by PMSF, disodium-EDTA, S(Dm) and soybean trypsin inhibitor (SBTI). SBTI and S(Dm) (the anti-hemorrhagic protein) acts as a non-competitive inhibitors that decrease the enzymatic activity. Its function is as follows. Thrombin-like enzyme that induces the formation of fibrin clot. Cleaves the Aalpha-chain of fibrinogen (FGA) with higher activity than the Bbeta-chain (FGB). Induces platelet aggregation in both platelet-rich plasma and in washed platelet preparations. This aggregation is strongly inhibited by preincubation of the enzyme with PMSF. The polypeptide is Thrombin-like enzyme TLBm (Bothrops marajoensis (Marajo lancehead)).